The following is a 148-amino-acid chain: MPSRLRKTRKLRGHVSHGHGRIGKHRKHPGGRGNAGGMHHHRINFDKYHPGYFGKVGMRHYHLKRNQSFCPTVNLDKLWTLVSEQTRVNAAKNKNGVAPIIDVVRSGYYKVLGKGKLPKQPVIVKAKFFSRRAEEKIKGVGGACVLVA.

The span at 1 to 30 (MPSRLRKTRKLRGHVSHGHGRIGKHRKHPG) shows a compositional bias: basic residues. Residues 1–37 (MPSRLRKTRKLRGHVSHGHGRIGKHRKHPGGRGNAGG) are disordered. Histidine 39 bears the (3S)-3-hydroxyhistidine mark. N6-acetyllysine is present on residues lysine 47 and lysine 55. Serine 68 carries the phosphoserine modification. Lysine 110 carries the N6-acetyllysine modification.

It belongs to the universal ribosomal protein uL15 family. In terms of assembly, component of the large ribosomal subunit. Post-translationally, hydroxylated on His-39 by MINA.

The protein localises to the cytoplasm. Functionally, component of the large ribosomal subunit. The ribosome is a large ribonucleoprotein complex responsible for the synthesis of proteins in the cell. This chain is Large ribosomal subunit protein uL15 (Rpl27a), found in Rattus norvegicus (Rat).